A 607-amino-acid polypeptide reads, in one-letter code: Karyogamy meiotic segregation protein 1 (607 aa).

The interval 83–135 (DDSFANQAEKPSMEQQNSKNSIKEDANEHSVNSAHSKSSSNASPESLNPSQMM) is disordered. The span at 111 to 132 (HSVNSAHSKSSSNASPESLNPS) shows a compositional bias: low complexity.

In terms of assembly, interacts with mcp1 and sad1.

The protein resides in the cytoplasm. The protein localises to the cytoskeleton. Its subcellular location is the microtubule organizing center. It localises to the spindle pole body. Has a role in karyogamy, recombination and segregation during meiosis. Although it has been shown to associate with the spindle pole body it is unlikely to be involved in its formation or maintenance. The protein is Karyogamy meiotic segregation protein 1 (kms1) of Schizosaccharomyces pombe (strain 972 / ATCC 24843) (Fission yeast).